The sequence spans 602 residues: Probable beta-glucosidase btgE (602 aa).

A signal peptide spans 1–18; the sequence is MRGAFLAAAAAVAGTAMA. Disordered stretches follow at residues 61–94 and 116–166; these read PPTL…SVVT and GVDA…TSFS. The segment covering 74 to 94 has biased composition (low complexity); that stretch reads PSSSSSSEVPSVPSSESSVVT. Residues 152–166 are compositionally biased toward polar residues; that stretch reads TSESPLPTPGVTSFS. E443 acts as the Proton donor in catalysis. E538 functions as the Nucleophile in the catalytic mechanism.

It belongs to the glycosyl hydrolase 17 family.

It is found in the secreted. Its subcellular location is the cell wall. The catalysed reaction is Hydrolysis of terminal, non-reducing beta-D-glucosyl residues with release of beta-D-glucose.. It participates in glycan metabolism; cellulose degradation. In terms of biological role, beta-glucosidases are one of a number of cellulolytic enzymes involved in the degradation of cellulosic biomass. Catalyzes the last step releasing glucose from the inhibitory cellobiose. The chain is Probable beta-glucosidase btgE (btgE) from Aspergillus flavus (strain ATCC 200026 / FGSC A1120 / IAM 13836 / NRRL 3357 / JCM 12722 / SRRC 167).